Reading from the N-terminus, the 301-residue chain is Protein translocase subunit SecF (301 aa).

Helical transmembrane passes span 17-37 (YIAL…IFQI), 137-157 (DALF…AIRF), 163-183 (IGAT…FYIL), 190-210 (IFIS…VVVF), 239-261 (LSRT…FFGG), and 272-292 (ILGI…VVLL).

Belongs to the SecD/SecF family. SecF subfamily. In terms of assembly, forms a complex with SecD. Part of the essential Sec protein translocation apparatus which comprises SecA, SecYEG and auxiliary proteins SecDF. Other proteins may also be involved.

Its subcellular location is the cell inner membrane. Its function is as follows. Part of the Sec protein translocase complex. Interacts with the SecYEG preprotein conducting channel. SecDF uses the proton motive force (PMF) to complete protein translocation after the ATP-dependent function of SecA. This chain is Protein translocase subunit SecF, found in Thermodesulfovibrio yellowstonii (strain ATCC 51303 / DSM 11347 / YP87).